A 326-amino-acid polypeptide reads, in one-letter code: Aspartate carbamoyltransferase catalytic subunit (326 aa).

Carbamoyl phosphate is bound by residues Arg-60 and Thr-61. Lys-88 contacts L-aspartate. The carbamoyl phosphate site is built by Arg-110, His-143, and Gln-146. L-aspartate-binding residues include Arg-183 and Arg-239. Carbamoyl phosphate-binding residues include Gly-280 and Pro-281.

The protein belongs to the aspartate/ornithine carbamoyltransferase superfamily. ATCase family. As to quaternary structure, heterododecamer (2C3:3R2) of six catalytic PyrB chains organized as two trimers (C3), and six regulatory PyrI chains organized as three dimers (R2).

It catalyses the reaction carbamoyl phosphate + L-aspartate = N-carbamoyl-L-aspartate + phosphate + H(+). Its pathway is pyrimidine metabolism; UMP biosynthesis via de novo pathway; (S)-dihydroorotate from bicarbonate: step 2/3. Functionally, catalyzes the condensation of carbamoyl phosphate and aspartate to form carbamoyl aspartate and inorganic phosphate, the committed step in the de novo pyrimidine nucleotide biosynthesis pathway. This Microcystis aeruginosa (strain NIES-843 / IAM M-2473) protein is Aspartate carbamoyltransferase catalytic subunit.